Consider the following 948-residue polypeptide: P cell-type agglutination protein map4 (948 aa).

A signal peptide spans 1–23 (MNSYAILLSLFFSFERLLTLANA). Residues Asn-31, Asn-32, and Asn-57 are each glycosylated (N-linked (GlcNAc...) asparagine). Disordered regions lie at residues 136-174 (IPRGDSATSTSIAPTYSASDSSATTITSSSPSTSIIGTG) and 253-333 (FYET…PTTY). Residues 149–174 (PTYSASDSSATTITSSSPSTSIIGTG) are compositionally biased toward low complexity. Polar residues predominate over residues 253-264 (FYETKSSTSSVP). Low complexity predominate over residues 265–332 (TQTIDSSSFT…PSLSSALPTT (68 aa)). An N-linked (GlcNAc...) asparagine glycan is attached at Asn-383. Residues 408-432 (LTSSTKKIPSTTLPTSSKMITTTTP) are disordered. N-linked (GlcNAc...) asparagine glycosylation is found at Asn-436, Asn-469, Asn-491, Asn-522, Asn-553, Asn-568, and Asn-598. Tandem repeats lie at residues 617-652 (SYVTETTTSGSVGFTTTIATPVGSTAGTVVVDIPTP), 653-688 (SWVTETVTSGSVGFTTTIATPVGSTAGTVLVDIPTP), 689-724 (SWVTETVTSGSVEFTTTIATPVGTTAGTVVVDIPTP), 725-760 (SWVTETVTSGSVGFTTTIATPIGTTAGTVLVDIPTP), and 761-796 (SWVTETVTSGSVGFTTTIATPVGTTAGTVLIDVPTP). Positions 617–796 (SYVTETTTSG…GTVLIDVPTP (180 aa)) are 5 X 36 AA approximate tandem repeats. The DIPSY domain maps to 796 to 948 (PTASSSPFPS…ANVVLRALEY (153 aa)). An N-linked (GlcNAc...) asparagine glycan is attached at Asn-921.

This sequence belongs to the mam3/map4 family.

It is found in the cell surface. Functionally, p cell-type specific protein which involved in agglutination during conjugation. This chain is P cell-type agglutination protein map4, found in Schizosaccharomyces pombe (strain 972 / ATCC 24843) (Fission yeast).